A 284-amino-acid chain; its full sequence is L-ribulose-5-phosphate 3-epimerase UlaE (284 aa).

The protein belongs to the L-ribulose-5-phosphate 3-epimerase family.

It catalyses the reaction L-ribulose 5-phosphate = L-xylulose 5-phosphate. The protein operates within cofactor degradation; L-ascorbate degradation; D-xylulose 5-phosphate from L-ascorbate: step 3/4. Catalyzes the isomerization of L-xylulose-5-phosphate to L-ribulose-5-phosphate. Is involved in the anaerobic L-ascorbate utilization. The sequence is that of L-ribulose-5-phosphate 3-epimerase UlaE from Escherichia coli O8 (strain IAI1).